Consider the following 931-residue polypeptide: Kinesin heavy chain (931 aa).

The region spanning 6-329 (SIKVVARFRP…LRFGMRAKSI (324 aa)) is the Kinesin motor domain. ATP contacts are provided by residues 87 to 94 (GQTGAGKS) and 237 to 244 (GSEKVGKT). Residues 342–864 (AELKSLLKKA…VKERLELAKA (523 aa)) adopt a coiled-coil conformation. Disordered stretches follow at residues 388 to 465 (TTDA…EKQL) and 886 to 931 (AKPL…FTKS). A compositionally biased stretch (polar residues) spans 402 to 419 (STRPSTPSLISDSRSETP). The segment covering 432–456 (LDKDEREEFLRRENELQDQISEKES) has biased composition (basic and acidic residues). Over residues 902–931 (PTIQNLQGQNEGNTSSGSSSKRASWFFTKS) the composition is skewed to polar residues.

It belongs to the TRAFAC class myosin-kinesin ATPase superfamily. Kinesin family. Kinesin subfamily.

The protein localises to the cytoplasm. It localises to the cytoskeleton. Functionally, kinesin is a microtubule-associated force-producing protein that may play a role in organelle transport. Its motor activity is directed toward the microtubule's plus end. The sequence is that of Kinesin heavy chain (KLP1) from Gibberella moniliformis (Maize ear and stalk rot fungus).